We begin with the raw amino-acid sequence, 851 residues long: DNA mismatch repair protein MutS (851 aa).

614–621 (GPNMGGKS) contacts ATP.

This sequence belongs to the DNA mismatch repair MutS family.

In terms of biological role, this protein is involved in the repair of mismatches in DNA. It is possible that it carries out the mismatch recognition step. This protein has a weak ATPase activity. This Yersinia pseudotuberculosis serotype O:1b (strain IP 31758) protein is DNA mismatch repair protein MutS.